A 555-amino-acid polypeptide reads, in one-letter code: E3 ubiquitin-protein ligase NEURL1B (555 aa).

An NHR 1 domain is found at Ala38–Ser194. Thr199 carries the phosphothreonine modification. Positions Asp279–Gly433 constitute an NHR 2 domain. The tract at residues Gln436–Pro493 is disordered. Positions Ser462–Ser480 are enriched in low complexity. The segment covering Pro481 to Pro493 has biased composition (pro residues). An RING-type zinc finger spans residues Cys503–Arg543.

Interacts with JAG1, DLL1 and DLL4. As to expression, highest expression in brain, prostate and small intestine. In the brain the levels are higher in fetal than in adult stage. In the adult brain the highest levels are detected in the olfactory system, cerebellar cortex, optic nerve and the frontal lobe.

It is found in the cytoplasm. The enzyme catalyses S-ubiquitinyl-[E2 ubiquitin-conjugating enzyme]-L-cysteine + [acceptor protein]-L-lysine = [E2 ubiquitin-conjugating enzyme]-L-cysteine + N(6)-ubiquitinyl-[acceptor protein]-L-lysine.. Its pathway is protein modification; protein ubiquitination. E3 ubiquitin-protein ligase involved in regulation of the Notch pathway through influencing the stability and activity of several Notch ligands. The protein is E3 ubiquitin-protein ligase NEURL1B (NEURL1B) of Homo sapiens (Human).